We begin with the raw amino-acid sequence, 445 residues long: GRAM domain-containing protein 2B (445 aa).

N-acetylmethionine is present on M1. The tract at residues 1–118 (MVKKRLSSSD…ERKKSSSSSQ (118 aa)) is disordered. Polar residues-rich tracts occupy residues 18-44 (PSNS…SSEA) and 56-68 (KSPT…SSVE). The segment covering 82-93 (SKSSFDGSSLLS) has biased composition (low complexity). Residues 94–112 (DKNDCKTESKTDSKTERKK) are compositionally biased toward basic and acidic residues. In terms of domain architecture, GRAM spans 123 to 190 (MHFHKLFLDV…FSVTLIKKTK (68 aa)). Residues 233–246 (TSVGNSPNPSSAEN) are compositionally biased toward polar residues. A disordered region spans residues 233 to 252 (TSVGNSPNPSSAENSFRADR). Phosphoserine occurs at positions 238, 255, and 265. The interval 277 to 331 (DLEGYSSSGSQTPESENSRDFHVTESQTVLNVTKGETKPPRTDAHGSRAPDGKAK) is disordered. Residues 281-291 (YSSSGSQTPES) are compositionally biased toward polar residues. The span at 311–330 (GETKPPRTDAHGSRAPDGKA) shows a compositional bias: basic and acidic residues.

This is GRAM domain-containing protein 2B (Gramd2b) from Mus musculus (Mouse).